The sequence spans 403 residues: Acetyl-CoA acetyltransferase IA (403 aa).

Cysteine 91 acts as the Acyl-thioester intermediate in catalysis. Catalysis depends on proton acceptor residues histidine 353 and cysteine 383. Residues 401–403 (AKL) carry the Microbody targeting signal motif.

This sequence belongs to the thiolase-like superfamily. Thiolase family. Multimeric.

The protein resides in the peroxisome. The catalysed reaction is 2 acetyl-CoA = acetoacetyl-CoA + CoA. It participates in metabolic intermediate biosynthesis; (R)-mevalonate biosynthesis; (R)-mevalonate from acetyl-CoA: step 1/3. This chain is Acetyl-CoA acetyltransferase IA (PACTA), found in Candida tropicalis (Yeast).